We begin with the raw amino-acid sequence, 135 residues long: ATP synthase epsilon chain (135 aa).

Belongs to the ATPase epsilon chain family. As to quaternary structure, F-type ATPases have 2 components, CF(1) - the catalytic core - and CF(0) - the membrane proton channel. CF(1) has five subunits: alpha(3), beta(3), gamma(1), delta(1), epsilon(1). CF(0) has three main subunits: a, b and c.

It localises to the cell inner membrane. Functionally, produces ATP from ADP in the presence of a proton gradient across the membrane. The polypeptide is ATP synthase epsilon chain (Granulibacter bethesdensis (strain ATCC BAA-1260 / CGDNIH1)).